The sequence spans 262 residues: Hydroxyethylthiazole kinase (262 aa).

Methionine 50 contacts substrate. ATP-binding residues include arginine 125 and threonine 171. Glycine 198 lines the substrate pocket.

It belongs to the Thz kinase family. It depends on Mg(2+) as a cofactor.

It carries out the reaction 5-(2-hydroxyethyl)-4-methylthiazole + ATP = 4-methyl-5-(2-phosphooxyethyl)-thiazole + ADP + H(+). The protein operates within cofactor biosynthesis; thiamine diphosphate biosynthesis; 4-methyl-5-(2-phosphoethyl)-thiazole from 5-(2-hydroxyethyl)-4-methylthiazole: step 1/1. Functionally, catalyzes the phosphorylation of the hydroxyl group of 4-methyl-5-beta-hydroxyethylthiazole (THZ). In Shigella sonnei (strain Ss046), this protein is Hydroxyethylthiazole kinase.